The chain runs to 879 residues: Phosphoenolpyruvate carboxylase (879 aa).

Residues H137 and K545 contribute to the active site.

Belongs to the PEPCase type 1 family. The cofactor is Mg(2+).

The catalysed reaction is oxaloacetate + phosphate = phosphoenolpyruvate + hydrogencarbonate. In terms of biological role, forms oxaloacetate, a four-carbon dicarboxylic acid source for the tricarboxylic acid cycle. This chain is Phosphoenolpyruvate carboxylase, found in Yersinia enterocolitica serotype O:8 / biotype 1B (strain NCTC 13174 / 8081).